A 38-amino-acid chain; its full sequence is Potassium channel toxin alpha-KTx 2.15 (38 aa).

Disulfide bonds link C7/C29, C13/C34, and C17/C36.

This sequence belongs to the short scorpion toxin superfamily. Potassium channel inhibitor family. Alpha-KTx 02 subfamily. In terms of tissue distribution, expressed by the venom gland.

Its subcellular location is the secreted. Functionally, blocks human voltage-gated potassium channels Kv1.2/KCNA2 (IC(50)=0.3 nM), Kv1.3/KCNA3 (IC(50)=8.3 nM) and Shaker IR (with inactivation domain removed) (IC(50)=12 nM) and blocks intermediate conductance calcium-activated potassium channel KCa3.1/KCNN4 (IC(50)=6.4 nM). The protein is Potassium channel toxin alpha-KTx 2.15 of Centruroides tecomanus (Scorpion).